We begin with the raw amino-acid sequence, 219 residues long: Phosphate-specific transport system accessory protein PhoU homolog 1 (219 aa).

This sequence belongs to the PhoU family. In terms of assembly, homodimer.

Its subcellular location is the cytoplasm. Functionally, plays a role in the regulation of phosphate uptake. The chain is Phosphate-specific transport system accessory protein PhoU homolog 1 from Methanothermobacter thermautotrophicus (strain ATCC 29096 / DSM 1053 / JCM 10044 / NBRC 100330 / Delta H) (Methanobacterium thermoautotrophicum).